Reading from the N-terminus, the 231-residue chain is MSDYKELAWQGLWKNNPGLVQLLGLCPLLAVTATLTNALGLGLATMLVLIGSNILVSLVRDYVPKEIRIPVFVMIIAALVTSVQLFINAYAYGLYLSLGIFLPLIVTNCVIIGRAEAFASRNSVVKSTFDGLMMGLGFTLVLCVLGASREILGQGTLFYGADQLLGEWAKGLTIQIWQVDTTFLLAMLPPGAFIGMGLLIALKNVIDNYIEARQPKVELEAPARVRITKVN.

6 helical membrane-spanning segments follow: residues 18–38 (GLVQ…LTNA), 39–59 (LGLG…VSLV), 69–89 (IPVF…FINA), 93–113 (GLYL…VIIG), 127–147 (STFD…VLGA), and 182–202 (TFLL…LIAL).

This sequence belongs to the NqrDE/RnfAE family. In terms of assembly, the complex is composed of six subunits: RnfA, RnfB, RnfC, RnfD, RnfE and RnfG.

Its subcellular location is the cell inner membrane. In terms of biological role, part of a membrane-bound complex that couples electron transfer with translocation of ions across the membrane. This is Ion-translocating oxidoreductase complex subunit E from Shewanella piezotolerans (strain WP3 / JCM 13877).